A 198-amino-acid chain; its full sequence is Recombination protein RecR (198 aa).

A C4-type zinc finger spans residues 58–73; the sequence is CSTCGNFTDTDPCALC. In terms of domain architecture, Toprim spans 81 to 175; it reads STICVVEQPK…KVTRIAAGIP (95 aa).

It belongs to the RecR family.

Functionally, may play a role in DNA repair. It seems to be involved in an RecBC-independent recombinational process of DNA repair. It may act with RecF and RecO. In Clostridium botulinum (strain Alaska E43 / Type E3), this protein is Recombination protein RecR.